The following is a 430-amino-acid chain: Enolase (430 aa).

Q167 provides a ligand contact to (2R)-2-phosphoglycerate. The Proton donor role is filled by E209. Positions 246, 287, and 314 each coordinate Mg(2+). K339, R368, S369, and K390 together coordinate (2R)-2-phosphoglycerate. K339 (proton acceptor) is an active-site residue.

It belongs to the enolase family. The cofactor is Mg(2+).

It localises to the cytoplasm. It is found in the secreted. Its subcellular location is the cell surface. It carries out the reaction (2R)-2-phosphoglycerate = phosphoenolpyruvate + H2O. Its pathway is carbohydrate degradation; glycolysis; pyruvate from D-glyceraldehyde 3-phosphate: step 4/5. Functionally, catalyzes the reversible conversion of 2-phosphoglycerate (2-PG) into phosphoenolpyruvate (PEP). It is essential for the degradation of carbohydrates via glycolysis. The polypeptide is Enolase (Prochlorococcus marinus (strain MIT 9301)).